Consider the following 655-residue polypeptide: p-hydroxybenzoic acid efflux pump subunit AaeB (655 aa).

A run of 11 helical transmembrane segments spans residues 13–33, 38–58, 69–89, 93–113, 121–141, 152–172, 370–390, 407–427, 431–451, 459–479, and 482–502; these read FAVK…HFQL, WAVL…GGEP, LRII…ISMI, LLMI…SSLV, WGLS…EPLL, EIVI…PRSI, LFWL…IAVV, FIYG…VIIP, QSML…GIEV, MGAL…TFHF, and FLDS…VILL.

The protein belongs to the aromatic acid exporter ArAE (TC 2.A.85) family.

The protein resides in the cell inner membrane. In terms of biological role, forms an efflux pump with AaeA. Could function as a metabolic relief valve, allowing to eliminate certain compounds when they accumulate to high levels in the cell. The sequence is that of p-hydroxybenzoic acid efflux pump subunit AaeB from Salmonella enteritidis PT4 (strain P125109).